A 438-amino-acid chain; its full sequence is Xylose isomerase (438 aa).

Catalysis depends on residues H100 and D103. Mg(2+) is bound by residues E231, E267, H270, D295, D306, D308, and D338.

It belongs to the xylose isomerase family. As to quaternary structure, homotetramer. Mg(2+) is required as a cofactor.

It is found in the cytoplasm. It carries out the reaction alpha-D-xylose = alpha-D-xylulofuranose. The protein is Xylose isomerase of Caldanaerobacter subterraneus subsp. yonseiensis (Thermoanaerobacter yonseiensis).